A 319-amino-acid polypeptide reads, in one-letter code: Thymidylate synthase (319 aa).

DUMP-binding positions include arginine 25 and 181–182 (RR). Cysteine 201 (nucleophile) is an active-site residue. DUMP is bound by residues 221–224 (RSAD), asparagine 232, and 262–264 (HIY). Aspartate 224 lines the (6R)-5,10-methylene-5,6,7,8-tetrahydrofolate pocket. Residue alanine 318 coordinates (6R)-5,10-methylene-5,6,7,8-tetrahydrofolate.

Belongs to the thymidylate synthase family. Bacterial-type ThyA subfamily. In terms of assembly, homodimer.

Its subcellular location is the cytoplasm. It carries out the reaction dUMP + (6R)-5,10-methylene-5,6,7,8-tetrahydrofolate = 7,8-dihydrofolate + dTMP. The protein operates within pyrimidine metabolism; dTTP biosynthesis. In terms of biological role, catalyzes the reductive methylation of 2'-deoxyuridine-5'-monophosphate (dUMP) to 2'-deoxythymidine-5'-monophosphate (dTMP) while utilizing 5,10-methylenetetrahydrofolate (mTHF) as the methyl donor and reductant in the reaction, yielding dihydrofolate (DHF) as a by-product. This enzymatic reaction provides an intracellular de novo source of dTMP, an essential precursor for DNA biosynthesis. This chain is Thymidylate synthase, found in Oenococcus oeni (strain ATCC BAA-331 / PSU-1).